The sequence spans 1196 residues: Nucleolar protein 6 (1196 aa).

Disordered regions lie at residues M1–P75 and K1140–K1196. Over residues H22–H31 the composition is skewed to basic and acidic residues. Residues K1165–G1174 are compositionally biased toward basic residues.

The protein belongs to the NRAP family. As to quaternary structure, part of the small subunit (SSU) processome, composed of more than 70 proteins and the RNA chaperone small nucleolar RNA (snoRNA) U3.

The protein localises to the nucleus. Its subcellular location is the nucleolus. The protein resides in the chromosome. Part of the small subunit (SSU) processome, first precursor of the small eukaryotic ribosomal subunit. During the assembly of the SSU processome in the nucleolus, many ribosome biogenesis factors, an RNA chaperone and ribosomal proteins associate with the nascent pre-rRNA and work in concert to generate RNA folding, modifications, rearrangements and cleavage as well as targeted degradation of pre-ribosomal RNA by the RNA exosome. The sequence is that of Nucleolar protein 6 from Drosophila sechellia (Fruit fly).